We begin with the raw amino-acid sequence, 159 residues long: Glucosamine 6-phosphate N-acetyltransferase (159 aa).

Serine 2 carries the N-acetylserine modification. D-glucosamine 6-phosphate contacts are provided by residues threonine 28, 86-89 (KIIH), and 98-100 (EDI). An N-acetyltransferase domain is found at 28–159 (TTVGTITPES…NAGVEMQIRK (132 aa)). Acetyl-CoA is bound by residues 100-102 (IAV) and 108-113 (GQGLGK). D-glucosamine 6-phosphate is bound by residues 129–130 (YK) and aspartate 134. 143-145 (YEK) provides a ligand contact to acetyl-CoA. Arginine 158 serves as a coordination point for D-glucosamine 6-phosphate.

This sequence belongs to the acetyltransferase family. GNA1 subfamily. In terms of assembly, homodimer.

The catalysed reaction is D-glucosamine 6-phosphate + acetyl-CoA = N-acetyl-D-glucosamine 6-phosphate + CoA + H(+). Its pathway is nucleotide-sugar biosynthesis; UDP-N-acetyl-alpha-D-glucosamine biosynthesis; N-acetyl-alpha-D-glucosamine 1-phosphate from alpha-D-glucosamine 6-phosphate (route I): step 1/2. This is Glucosamine 6-phosphate N-acetyltransferase (GNA1) from Saccharomyces cerevisiae (strain ATCC 204508 / S288c) (Baker's yeast).